A 485-amino-acid polypeptide reads, in one-letter code: TQRDTLTKGMTQGQIVAGPDDTKIDQSIMDQGVCATIALPFDIHVAQSVKNVMFMFAWTQKHGLAVNNLVILGVPGYLNMWKRFGESTDEPSESSKRCCYEKPTDPVSGEIVTPAFDPADEISEITHQEESADIKPVRLLDARLLGYTWVTQNHSWIVAYSDEPIKDGNEVVTLRNIGNNNFCDALRKCTDKSACIHQYLQFAWNSFGDPTVRTRQVVFEVVGWADSDTTNNNSDTLFYRTTQADNWQVLTESKTNTIGLAEVDWFNFKYETKQEVSIEIARQTWTSTLNAGVSTVSRVPKVPIKVKINVDTFLKVLFAVYKADLYDIFLQFASVFKKGGNRQYWLNYTQEPNTKSNYNHKIYNDKIRYLQEDVQVHPNETQSKWWWWSFKKVALTTMTVVALTRFKASGINGQYISARQFSGGETVSPYRLAAPFDSCLWRRSPNPLGTDGLKVALAHHPLAGASNRNKLRVSIPAQCICSITA.

2 disulfide bridges follow: Cys-34/Cys-98 and Cys-183/Cys-189.

This sequence belongs to the aerolysin family. In terms of assembly, oligomerizes as a hexamer. The N-terminus is blocked.

Cytolytic protein with insecticidal activity. Acts as a pro-inflammatory agent. The sequence is that of Cytolytic protein enterolobin from Enterolobium contortisiliquum (Pacara earpod tree).